The primary structure comprises 87 residues: Exendin-4 (87 aa).

The first 23 residues, 1–23 (MKIILWLCVFGLFLATLFPISWQ), serve as a signal peptide directing secretion. Positions 24–45 (MPVESGLSSEDSASSESFASKI) are excised as a propeptide. Ser86 bears the Serine amide mark.

The protein belongs to the glucagon family. In terms of tissue distribution, expressed by the venom gland.

The protein resides in the secreted. Its function is as follows. Venom protein that mimics the incretin hormone glucagon-like peptide 1 (GLP-1). It stimulates insulin synthesis and secretion, protects against beta-cell apoptosis in response to different insults, and promotes beta-cell proliferation It also promotes satiety, reduces food intake, reduces fat deposition, reduces body weight and inhibits gastric emptying. Interacts with GLP-1 receptor (GLP1R). Induces hypotension that is mediated by relaxation of cardiac smooth muscle. The protein is Exendin-4 of Heloderma suspectum cinctum (Banded Gila monster).